Reading from the N-terminus, the 230-residue chain is Urease accessory protein UreE (230 aa).

Composition is skewed to basic and acidic residues over residues 182–193 and 204–230; these read HVHVDSPLDEPH and SHGDGHSHSHSHDHDHDHRHDDHDHKH. A disordered region spans residues 182–230; it reads HVHVDSPLDEPHGSGLHVHAIHSHGDGHSHSHSHDHDHDHRHDDHDHKH.

This sequence belongs to the UreE family.

The protein localises to the cytoplasm. Functionally, involved in urease metallocenter assembly. Binds nickel. Probably functions as a nickel donor during metallocenter assembly. The protein is Urease accessory protein UreE of Yersinia mollaretii.